We begin with the raw amino-acid sequence, 252 residues long: 5'-nucleotidase SurE (252 aa).

Positions 8, 9, 39, and 95 each coordinate a divalent metal cation.

This sequence belongs to the SurE nucleotidase family. Requires a divalent metal cation as cofactor.

The protein resides in the cytoplasm. The enzyme catalyses a ribonucleoside 5'-phosphate + H2O = a ribonucleoside + phosphate. Nucleotidase that shows phosphatase activity on nucleoside 5'-monophosphates. This Thermoanaerobacter sp. (strain X514) protein is 5'-nucleotidase SurE.